We begin with the raw amino-acid sequence, 475 residues long: Adenylyl cyclase-associated protein 1 (475 aa).

Ala2 is modified (N-acetylalanine). Position 31 is a phosphotyrosine (Tyr31). At Ser34 the chain carries Phosphoserine. The residue at position 81 (Lys81) is an N6-acetyllysine. Disordered stretches follow at residues 216–237 (ELSGLPSGPSAGSCPPPPPPCP) and 278–319 (MKTH…KKEP). The segment covering 218–228 (SGLPSGPSAGS) has biased composition (low complexity). Lys287 is modified (N6-methyllysine). Ser290, Ser295, and Ser301 each carry phosphoserine. The residue at position 307 (Thr307) is a Phosphothreonine. Ser308 and Ser310 each carry phosphoserine. A C-CAP/cofactor C-like domain is found at 319–453 (PAVLELEGKK…EGGDFNEFPV (135 aa)). Residue Lys348 forms a Glycyl lysine isopeptide (Lys-Gly) (interchain with G-Cter in SUMO1) linkage.

Belongs to the CAP family. In terms of assembly, homodimer. Binds actin monomers.

It localises to the cell membrane. Directly regulates filament dynamics and has been implicated in a number of complex developmental and morphological processes, including mRNA localization and the establishment of cell polarity. In Homo sapiens (Human), this protein is Adenylyl cyclase-associated protein 1 (CAP1).